Reading from the N-terminus, the 465-residue chain is Serine/threonine-protein kinase 38 (465 aa).

Ala-2 is modified (N-acetylalanine). Residues 62-87 (KRLRRSAHARKETEFLRLKRTRLGLE) form an interaction with S100B region. Thr-74 bears the Phosphothreonine mark. The Protein kinase domain maps to 89–382 (FESLKVIGRG…VEEIKNNLFF (294 aa)). ATP is bound by residues 95 to 103 (IGRGAFGEV) and Lys-118. Asp-212 (proton acceptor) is an active-site residue. A Phosphoserine modification is found at Ser-264. Ser-281 bears the Phosphoserine; by autocatalysis mark. The UFM1-interacting motif (UFIM) motif lies at 306-311 (WSLGVI). Residues 383–455 (EGVDWEHIRE…KRFEGLTARG (73 aa)) form the AGC-kinase C-terminal domain. The residue at position 444 (Thr-444) is a Phosphothreonine; by STK24/MST3.

Belongs to the protein kinase superfamily. AGC Ser/Thr protein kinase family. Homodimeric S100B binds two molecules of STK38. Interacts with MOB1 and MOB2. Interacts with MAP3K1 and MAP3K2 (via the kinase catalytic domain). Forms a tripartite complex with MOBKL1B and STK3/MST2. Interacts with MICAL1; leading to inhibit the protein kinase activity by antagonizing activation by MST1/STK4. Requires Mg(2+) as cofactor. ISGylated. In terms of processing, phosphorylated by STK3/MST2 and this is enhanced by MOBKL1B. Expressed at high levels in spleen, lung, thymus, brain and fat tissue.

The protein localises to the nucleus. Its subcellular location is the cytoplasm. It is found in the chromosome. The catalysed reaction is L-seryl-[protein] + ATP = O-phospho-L-seryl-[protein] + ADP + H(+). It catalyses the reaction L-threonyl-[protein] + ATP = O-phospho-L-threonyl-[protein] + ADP + H(+). Its activity is regulated as follows. Activated by binding of S100B which releases autoinhibitory N-lobe interactions, enabling ATP to bind and the autophosphorylation of Ser-281. Thr-444 then undergoes calcium-dependent phosphorylation by STK24/MST3. Interactions between phosphorylated Thr-444 and the N-lobe promote additional structural changes that complete the activation of the kinase. Autoinhibition is also released by the binding of MOB1/MOBKL1A and MOB2/HCCA2 to the N-terminal of STK38. Its function is as follows. Serine/threonine-protein kinase that acts as a negative regulator of MAP3K1/2 signaling. Converts MAP3K2 from its phosphorylated form to its non-phosphorylated form and inhibits autophosphorylation of MAP3K2. Acts as an ufmylation 'reader' in a kinase-independent manner: specifically recognizes and binds mono-ufmylated histone H4 in response to DNA damage, promoting the recruitment of SUV39H1 to the double-strand breaks, resulting in ATM activation. This chain is Serine/threonine-protein kinase 38, found in Mus musculus (Mouse).